Reading from the N-terminus, the 1225-residue chain is Mediator of RNA polymerase II transcription subunit 13 (1225 aa).

Belongs to the Mediator complex subunit 13 family. As to quaternary structure, component of the srb8-11 complex which consists of rb8, srb9(TRAP240), srb10 and srb11. The srb8-11 complex associates with the Mediator complex thereby blocking association with RNA polymerase II and leading to reduced transcriptional activation by Mediator.

It localises to the nucleus. Its function is as follows. Component of the srb8-11 complex. The srb8-11 complex is a regulatory module of the Mediator complex which is itself involved in regulation of basal and activated RNA polymerase II-dependent transcription. The srb8-11 complex may be involved in the transcriptional repression of a subset of genes regulated by Mediator. It may inhibit the association of the Mediator complex with RNA polymerase II to form the holoenzyme complex. The chain is Mediator of RNA polymerase II transcription subunit 13 (srb9) from Schizosaccharomyces pombe (strain 972 / ATCC 24843) (Fission yeast).